An 820-amino-acid chain; its full sequence is Pentatricopeptide repeat-containing protein At3g22150, chloroplastic (820 aa).

The interval 1–42 is disordered; the sequence is MAGSALPLPPPPPLSLQSPSQNQTRHSSTFSPPTLTPQTPSI. A chloroplast-targeting transit peptide spans 1–50; it reads MAGSALPLPPPPPLSLQSPSQNQTRHSSTFSPPTLTPQTPSIRSRLSKIC. Over residues 22–42 the composition is skewed to polar residues; sequence NQTRHSSTFSPPTLTPQTPSI. PPR repeat units follow at residues 69–99, 106–136, 141–177, 178–212, 213–247, 250–284, 285–316, 317–347, 352–382, 383–417, 418–452, 485–519, 520–550, 555–585, 586–620, 621–651, and 657–691; these read TTVLWNTIIIGFICNNLPHEALLFYSRMKKT, DAYTYSSTLKACAETKNLKAGKAVHCHLIRC, SRVVHNSLMNMYVSCLNAPDCFEYDVVRKVFDNMRRK, NVVAWNTLISWYVKTGRNAEACRQFGIMMRMEVKP, SPVSFVNVFPAVSISRSIKKANVFYGLMLKLGDEY, DLFVVSSAISMYAELGDIESSRRVFDSCVERNIEV, WNTMIGVYVQNDCLVESIELFLEAIGSKEIVS, DEVTYLLAASAVSALQQVELGRQFHGFVSKN, PIVIVNSLMVMYSRCGSVHKSFGVFLSMRER, DVVSWNTMISAFVQNGLDDEGLMLVYEMQKQGFKI, DYITVTALLSAASNLRNKEIGKQTHAFLIRQGIQF, DQATWNSMISGYTQNGHTEKTFLVFRKMLEQNIRP, NAVTVASILPACSQIGSVDLGKQLHGFSIRQ, NVFVASALVDMYSKAGAIKYAEDMFSQTKER, NSVTYTTMILGYGQHGMGERAISLFLSMQESGIKP, DAITFVAVLSACSYSGLIDEGLKIFEEMREV, and SSEHYCCITDMLGRVGRVNEAYEFVKGLGEEGNIA. A type E motif region spans residues 693–770; the sequence is LWGSLLGSCK…EVGRSGIEIA (78 aa). The type E(+) motif stretch occupies residues 771–801; that stretch reads GYVNCFVSRDQEHPHSSEIYDVIDGLAKDMR.

Belongs to the PPR family. PCMP-E subfamily.

Its subcellular location is the plastid. It localises to the chloroplast. This chain is Pentatricopeptide repeat-containing protein At3g22150, chloroplastic (PCMP-E95), found in Arabidopsis thaliana (Mouse-ear cress).